Reading from the N-terminus, the 424-residue chain is UPF0597 protein Ssed_2537 (424 aa).

The protein belongs to the UPF0597 family.

The protein is UPF0597 protein Ssed_2537 of Shewanella sediminis (strain HAW-EB3).